The chain runs to 79 residues: Small ribosomal subunit protein bS16 (79 aa).

It belongs to the bacterial ribosomal protein bS16 family.

The polypeptide is Small ribosomal subunit protein bS16 (Buchnera aphidicola subsp. Acyrthosiphon pisum (strain 5A)).